The following is a 143-amino-acid chain: Cell division protein SepF (143 aa).

Belongs to the SepF family. In terms of assembly, homodimer. Interacts with FtsZ.

The protein resides in the cytoplasm. Cell division protein that is part of the divisome complex and is recruited early to the Z-ring. Probably stimulates Z-ring formation, perhaps through the cross-linking of FtsZ protofilaments. Its function overlaps with FtsA. This chain is Cell division protein SepF, found in Geobacillus thermodenitrificans (strain NG80-2).